Here is a 477-residue protein sequence, read N- to C-terminus: Glycogen synthase (477 aa).

An ADP-alpha-D-glucose-binding site is contributed by Lys15.

The protein belongs to the glycosyltransferase 1 family. Bacterial/plant glycogen synthase subfamily.

The catalysed reaction is [(1-&gt;4)-alpha-D-glucosyl](n) + ADP-alpha-D-glucose = [(1-&gt;4)-alpha-D-glucosyl](n+1) + ADP + H(+). The protein operates within glycan biosynthesis; glycogen biosynthesis. Functionally, synthesizes alpha-1,4-glucan chains using ADP-glucose. The protein is Glycogen synthase of Myxococcus xanthus (strain DK1622).